The primary structure comprises 224 residues: 7-cyano-7-deazaguanine synthase (224 aa).

Residue 10-20 participates in ATP binding; that stretch reads LSGGLDSATVV. Residues cysteine 189, cysteine 199, cysteine 202, and cysteine 205 each contribute to the Zn(2+) site.

The protein belongs to the QueC family. The cofactor is Zn(2+).

It catalyses the reaction 7-carboxy-7-deazaguanine + NH4(+) + ATP = 7-cyano-7-deazaguanine + ADP + phosphate + H2O + H(+). It participates in purine metabolism; 7-cyano-7-deazaguanine biosynthesis. Its function is as follows. Catalyzes the ATP-dependent conversion of 7-carboxy-7-deazaguanine (CDG) to 7-cyano-7-deazaguanine (preQ(0)). The sequence is that of 7-cyano-7-deazaguanine synthase from Pseudomonas putida (strain ATCC 47054 / DSM 6125 / CFBP 8728 / NCIMB 11950 / KT2440).